We begin with the raw amino-acid sequence, 156 residues long: Small ribosomal subunit protein uS7 (156 aa).

Belongs to the universal ribosomal protein uS7 family. Part of the 30S ribosomal subunit. Contacts proteins S9 and S11.

Functionally, one of the primary rRNA binding proteins, it binds directly to 16S rRNA where it nucleates assembly of the head domain of the 30S subunit. Is located at the subunit interface close to the decoding center, probably blocks exit of the E-site tRNA. The chain is Small ribosomal subunit protein uS7 from Streptococcus thermophilus (strain CNRZ 1066).